Consider the following 366-residue polypeptide: D-alanine--D-alanine ligase (366 aa).

The ATP-grasp domain occupies 148 to 357 (KMTFEQAGLA…FPELVDRLIQ (210 aa)). 184–239 (EAALGYPAFVKPANLGSSVGIAKVRSRQELEAALDNAASYDRRLVVEAGVVAREVE) lines the ATP pocket. Residues Asp310, Glu324, and Asn326 each coordinate Mg(2+).

It belongs to the D-alanine--D-alanine ligase family. Mg(2+) serves as cofactor. Requires Mn(2+) as cofactor.

It localises to the cytoplasm. The catalysed reaction is 2 D-alanine + ATP = D-alanyl-D-alanine + ADP + phosphate + H(+). It functions in the pathway cell wall biogenesis; peptidoglycan biosynthesis. Functionally, cell wall formation. This chain is D-alanine--D-alanine ligase, found in Nostoc punctiforme (strain ATCC 29133 / PCC 73102).